Consider the following 576-residue polypeptide: Zinc finger protein 791 (576 aa).

The KRAB domain occupies 4–90 (VAFKDVSVSF…AETFSPNLSV (87 aa)). 17 consecutive C2H2-type zinc fingers follow at residues 100–122 (YECT…MRSH), 132–154 (YKCK…ERSH), 160–182 (YKCK…EQTH), 188–210 (YECK…ERIH), 216–238 (YECK…ERTH), 244–266 (YACK…MITH), 272–294 (YKCK…ERIH), 300–322 (YTCK…ERIH), 328–350 (YKCK…VRVH), 356–378 (YKCK…ERTH), 384–406 (YECK…KRNH), 412–434 (YECK…MITH), 440–462 (YKCR…ERTH), 468–490 (YECK…KRTH), 496–518 (YECK…MRMH), 524–546 (YKCK…TRIH), and 552–574 (LECK…MRMH).

It belongs to the krueppel C2H2-type zinc-finger protein family.

The protein localises to the nucleus. In terms of biological role, may be involved in transcriptional regulation. This chain is Zinc finger protein 791 (ZNF791), found in Pongo abelii (Sumatran orangutan).